The following is a 1785-amino-acid chain: BCL-6 corepressor-like protein 1 (1785 aa).

Disordered regions lie at residues 65 to 101 (VGSGSNARGADPDGSATEKLGHKSEDKPDDPQPKMDY), 113 to 137 (VPLSSPGDGLKLPASDSAEASNSRA), and 343 to 368 (ASTPPAAPAPPSVPMPTPTPSSGPPS). Basic and acidic residues predominate over residues 83–97 (KLGHKSEDKPDDPQP). The residue at position 496 (serine 496) is a Phosphoserine. Composition is skewed to polar residues over residues 527–539 (PCTSPSGSTTTQP) and 586–600 (GTEQQTEGTSVTFSP). Disordered regions lie at residues 527–550 (PCTSPSGSTTTQPAPDGVPGPLAD) and 562–646 (PTPQ…PMPV). 2 positions are modified to phosphoserine: serine 599 and serine 613. A Glycyl lysine isopeptide (Lys-Gly) (interchain with G-Cter in SUMO2) cross-link involves residue lysine 747. Disordered stretches follow at residues 753-781 (IIDQGEPKGTGATCGKKGSQAGAEGQPST), 876-901 (SSSEAVHGLPEGQPRPGGSFVPEQDP), and 937-977 (VQPS…LKLA). Serine 1029 and serine 1033 each carry phosphoserine. Lysine 1092 is covalently cross-linked (Glycyl lysine isopeptide (Lys-Gly) (interchain with G-Cter in SUMO2)). Disordered regions lie at residues 1107–1293 (PDDV…QGRR) and 1312–1487 (WDTN…PEAR). Serine 1162 is modified (phosphoserine). Positions 1176-1185 (VRGKHKHRKP) are enriched in basic residues. Residues 1195 to 1213 (KRADSHEEGSLEKKAKSSF) show a composition bias toward basic and acidic residues. Positions 1222–1234 (STRTRSQSGSICS) are enriched in polar residues. The segment covering 1271-1284 (TQRDTQYRSHHAQD) has biased composition (basic and acidic residues). Acidic residues predominate over residues 1314-1324 (TNEEEEEEEEE). The Nuclear localization signal motif lies at 1328–1336 (KRKKRRRQK). Over residues 1328–1339 (KRKKRRRQKSRK) the composition is skewed to basic residues. A compositionally biased stretch (basic and acidic residues) spans 1352-1363 (EQRRKGRADLKA). A compositionally biased stretch (polar residues) spans 1440–1449 (WSQQKTRSPK). A compositionally biased stretch (low complexity) spans 1461-1480 (TPSKSRSASSEEASESPTAR). At serine 1476 the chain carries Phosphoserine. 3 ANK repeats span residues 1529 to 1558 (AGYTALHEACSRGWTDILNILLEHGANVNC), 1562 to 1591 (DGTRPVHDAVVNDNLETIWLLLSYGADPTL), and 1595 to 1623 (SGQTAMKLASSDTMKRFLSDHLSDLQGRA). Residues 1668-1785 (DDFMFELSDK…SEVEFQSCNS (118 aa)) are PCGF Ub-like fold domain (PUFD); required for the interaction with the KDM2B-SKP1 heterodimeric complex.

The protein belongs to the BCOR family. In terms of assembly, interacts with PCGF1, forming heterodimers. The PCGF1-BCORL1 heterodimeric complex interacts with the KDM2B-SKP1 heterodimeric complex to form a homotetrameric polycomb repression complex 1 (PRC1.1). Interacts with SKP1. Interacts with CTBP1, HDAC4, HDAC5 and HDAC7. Detected in testis and prostate. Detected at lower levels in peripheral blood leukocytes and spleen. Mainly expressed in the spermatogonia and primary spermatocytes.

It is found in the nucleus. Functionally, transcriptional corepressor. May specifically inhibit gene expression when recruited to promoter regions by sequence-specific DNA-binding proteins such as BCL6. This repression may be mediated at least in part by histone deacetylase activities which can associate with this corepressor. The chain is BCL-6 corepressor-like protein 1 from Homo sapiens (Human).